The sequence spans 78 residues: uncharacterized protein (78 aa).

The tract at residues 1–78 (MSSNSNTDHS…VDLEGPKDEQ (78 aa)) is disordered. 2 stretches are compositionally biased toward basic and acidic residues: residues 10 to 33 (STGD…ETES) and 63 to 78 (LNLK…KDEQ).

This is an uncharacterized protein from Schizosaccharomyces pombe (strain 972 / ATCC 24843) (Fission yeast).